A 429-amino-acid polypeptide reads, in one-letter code: UDP-N-acetylglucosamine 1-carboxyvinyltransferase (429 aa).

22–23 is a binding site for phosphoenolpyruvate; sequence KN. Position 96 (Arg96) interacts with UDP-N-acetyl-alpha-D-glucosamine. Catalysis depends on Cys120, which acts as the Proton donor. A 2-(S-cysteinyl)pyruvic acid O-phosphothioketal modification is found at Cys120. UDP-N-acetyl-alpha-D-glucosamine is bound by residues 125 to 129, Asp310, and Ile332; that span reads RPVDL.

The protein belongs to the EPSP synthase family. MurA subfamily.

It is found in the cytoplasm. It carries out the reaction phosphoenolpyruvate + UDP-N-acetyl-alpha-D-glucosamine = UDP-N-acetyl-3-O-(1-carboxyvinyl)-alpha-D-glucosamine + phosphate. Its pathway is cell wall biogenesis; peptidoglycan biosynthesis. Cell wall formation. Adds enolpyruvyl to UDP-N-acetylglucosamine. The protein is UDP-N-acetylglucosamine 1-carboxyvinyltransferase of Caulobacter vibrioides (strain ATCC 19089 / CIP 103742 / CB 15) (Caulobacter crescentus).